We begin with the raw amino-acid sequence, 486 residues long: H2.0-like homeobox protein (486 aa).

Disordered stretches follow at residues 83-173 and 330-486; these read ASFQ…SSKD and KWRH…LGGL. The segment covering 125 to 135 has biased composition (low complexity); it reads QQQQQQQQPQQ. The segment at residues 276-335 is a DNA-binding region (homeobox); that stretch reads RSWSRAVFSNLQRKGLEKRFEIQKYVTKPDRKQLAAMLGLTDAQVKVWFQNRRMKWRHSK. Composition is skewed to basic and acidic residues over residues 334-349 and 363-372; these read SKEAQAQKDKDKEAGE and EERSPSRSEG. A compositionally biased stretch (acidic residues) spans 373–383; that stretch reads EAESESSDPES. Basic and acidic residues predominate over residues 390-401; that stretch reads DTERTEGTERSL. Low complexity predominate over residues 409–420; it reads ASAAGALLAASS. The segment covering 421-440 has biased composition (gly residues); it reads GGSGGSGGGGGGGFNFGGLS. The segment covering 441 to 474 has biased composition (low complexity); it reads SGSTTSAGSSGSHSSGGASELLPAPQPSLSSAPK. Residues 475–486 are compositionally biased toward pro residues; that stretch reads SPEPVPAPLGGL.

The protein belongs to the H2.0 homeobox family.

It localises to the nucleus. In terms of biological role, transcription factor required for TBX21/T-bet-dependent maturation of Th1 cells as well as maintenance of Th1-specific gene expression. Involved in embryogenesis and hematopoiesis. The polypeptide is H2.0-like homeobox protein (HLX) (Bos taurus (Bovine)).